The sequence spans 946 residues: Leucine--tRNA ligase (946 aa).

The 'HIGH' region signature appears at 43–53 (PYPNGTIHIGH). Positions 638 to 642 (KMSKS) match the 'KMSKS' region motif. K641 contributes to the ATP binding site.

This sequence belongs to the class-I aminoacyl-tRNA synthetase family.

The protein resides in the cytoplasm. The enzyme catalyses tRNA(Leu) + L-leucine + ATP = L-leucyl-tRNA(Leu) + AMP + diphosphate. This is Leucine--tRNA ligase from Pyrobaculum calidifontis (strain DSM 21063 / JCM 11548 / VA1).